We begin with the raw amino-acid sequence, 309 residues long: Glycine--tRNA ligase alpha subunit (309 aa).

This sequence belongs to the class-II aminoacyl-tRNA synthetase family. In terms of assembly, tetramer of two alpha and two beta subunits.

Its subcellular location is the cytoplasm. The enzyme catalyses tRNA(Gly) + glycine + ATP = glycyl-tRNA(Gly) + AMP + diphosphate. The protein is Glycine--tRNA ligase alpha subunit of Anaeromyxobacter sp. (strain K).